The sequence spans 256 residues: Putative ankyrin repeat protein FPV231 (256 aa).

5 ANK repeats span residues 1-20, 24-53, 57-86, 90-119, and 123-151; these read MFGN…RIDS, EECL…DTNI, YNRS…DYNL, HGYT…DPNI, and EKHT…DINI.

This is Putative ankyrin repeat protein FPV231 from Vertebrata (FPV).